We begin with the raw amino-acid sequence, 101 residues long: NAD(P)H-quinone oxidoreductase subunit 4L, chloroplastic (101 aa).

The next 3 helical transmembrane spans lie at 2–22, 32–52, and 61–81; these read MLEH…YGLI, MCLE…SDLF, and VFSI…PAIV.

This sequence belongs to the complex I subunit 4L family. As to quaternary structure, NDH is composed of at least 16 different subunits, 5 of which are encoded in the nucleus.

It is found in the plastid. The protein resides in the chloroplast thylakoid membrane. It catalyses the reaction a plastoquinone + NADH + (n+1) H(+)(in) = a plastoquinol + NAD(+) + n H(+)(out). The catalysed reaction is a plastoquinone + NADPH + (n+1) H(+)(in) = a plastoquinol + NADP(+) + n H(+)(out). Its function is as follows. NDH shuttles electrons from NAD(P)H:plastoquinone, via FMN and iron-sulfur (Fe-S) centers, to quinones in the photosynthetic chain and possibly in a chloroplast respiratory chain. The immediate electron acceptor for the enzyme in this species is believed to be plastoquinone. Couples the redox reaction to proton translocation, and thus conserves the redox energy in a proton gradient. This chain is NAD(P)H-quinone oxidoreductase subunit 4L, chloroplastic, found in Nuphar advena (Common spatterdock).